The sequence spans 78 residues: uncharacterized protein (78 aa).

The next 2 helical transmembrane spans lie at 5–24 (LALL…IKLM) and 39–61 (LWLQ…AGFI).

The protein localises to the cell membrane. This is an uncharacterized protein from Bacillus subtilis (strain 168).